Consider the following 184-residue polypeptide: ATP synthase subunit b, chloroplastic (184 aa).

Residues 27-49 traverse the membrane as a helical segment; sequence LATNLINLSVVLGVLIFFGKGVL.

It belongs to the ATPase B chain family. In terms of assembly, F-type ATPases have 2 components, F(1) - the catalytic core - and F(0) - the membrane proton channel. F(1) has five subunits: alpha(3), beta(3), gamma(1), delta(1), epsilon(1). F(0) has four main subunits: a(1), b(1), b'(1) and c(10-14). The alpha and beta chains form an alternating ring which encloses part of the gamma chain. F(1) is attached to F(0) by a central stalk formed by the gamma and epsilon chains, while a peripheral stalk is formed by the delta, b and b' chains.

Its subcellular location is the plastid. The protein localises to the chloroplast thylakoid membrane. Functionally, f(1)F(0) ATP synthase produces ATP from ADP in the presence of a proton or sodium gradient. F-type ATPases consist of two structural domains, F(1) containing the extramembraneous catalytic core and F(0) containing the membrane proton channel, linked together by a central stalk and a peripheral stalk. During catalysis, ATP synthesis in the catalytic domain of F(1) is coupled via a rotary mechanism of the central stalk subunits to proton translocation. Component of the F(0) channel, it forms part of the peripheral stalk, linking F(1) to F(0). The chain is ATP synthase subunit b, chloroplastic from Guizotia abyssinica (Niger).